The primary structure comprises 373 residues: LIM domain-binding protein 1 (373 aa).

Disordered regions lie at residues Pro-248–Gln-297 and Asp-329–Gln-373. The segment covering Ser-266–Asn-282 has biased composition (low complexity). The segment covering Pro-288 to Gln-297 has biased composition (polar residues). Positions Asp-298–Glu-337 constitute an LIM interaction domain (LID) domain.

The protein belongs to the LDB family. As to quaternary structure, forms homodimers and heterodimers. Interacts with and activates lhx1/lim1. The stoichiometry of lhx1/lim1 and ldb1 is important for their function and an excess of ldb1 can inhibit lhx1/lim1 function. When bound to lhx1/lim1, escapes degradation by rnf12. Interacts with the N-terminal region of rnf12. Undergoes rnf12-mediated ubiquitin-proteasome-dependent degradation.

It is found in the nucleus. Binds to the LIM domain of a wide variety of LIM domain-containing transcription factors. Acts as a coactivator together with otx2 to stimulate lhx1/lim1-mediated activation of the gsc promoter in the Spemann organizer. Acts synergistically with lhx1/lim1 and ssbp in axis formation. The chain is LIM domain-binding protein 1 from Xenopus tropicalis (Western clawed frog).